A 546-amino-acid polypeptide reads, in one-letter code: Membrane protein insertase YidC (546 aa).

The chain crosses the membrane as a helical span at residues 8–28; sequence ILLATVLSVGILILWQVIFPT. The interval 31–70 is disordered; the sequence is VPPKPAPPPAAEVAKPAAPASPAPGAAAPAVPAPPPDAPE. Low complexity predominate over residues 41 to 60; it reads AEVAKPAAPASPAPGAAAPA. Transmembrane regions (helical) follow at residues 326 to 346, 356 to 376, 422 to 442, 459 to 479, and 498 to 518; these read IDYG…LYVM, WGVA…PLTY, LGGC…YAAL, LTAH…SFVM, and FFPG…TLYI.

The protein belongs to the OXA1/ALB3/YidC family. Type 1 subfamily. In terms of assembly, interacts with the Sec translocase complex via SecD. Specifically interacts with transmembrane segments of nascent integral membrane proteins during membrane integration.

The protein localises to the cell inner membrane. Its function is as follows. Required for the insertion and/or proper folding and/or complex formation of integral membrane proteins into the membrane. Involved in integration of membrane proteins that insert both dependently and independently of the Sec translocase complex, as well as at least some lipoproteins. Aids folding of multispanning membrane proteins. The sequence is that of Membrane protein insertase YidC from Anaeromyxobacter sp. (strain K).